A 411-amino-acid chain; its full sequence is Serine hydroxymethyltransferase (411 aa).

Residues Leu117 and 121-123 (GHL) each bind (6S)-5,6,7,8-tetrahydrofolate. Lys226 is modified (N6-(pyridoxal phosphate)lysine).

The protein belongs to the SHMT family. In terms of assembly, homodimer. Requires pyridoxal 5'-phosphate as cofactor.

The protein resides in the cytoplasm. It carries out the reaction (6R)-5,10-methylene-5,6,7,8-tetrahydrofolate + glycine + H2O = (6S)-5,6,7,8-tetrahydrofolate + L-serine. The protein operates within one-carbon metabolism; tetrahydrofolate interconversion. Its pathway is amino-acid biosynthesis; glycine biosynthesis; glycine from L-serine: step 1/1. Functionally, catalyzes the reversible interconversion of serine and glycine with tetrahydrofolate (THF) serving as the one-carbon carrier. This reaction serves as the major source of one-carbon groups required for the biosynthesis of purines, thymidylate, methionine, and other important biomolecules. Also exhibits THF-independent aldolase activity toward beta-hydroxyamino acids, producing glycine and aldehydes, via a retro-aldol mechanism. The sequence is that of Serine hydroxymethyltransferase from Syntrophobacter fumaroxidans (strain DSM 10017 / MPOB).